Reading from the N-terminus, the 275-residue chain is 3-methyl-2-oxobutanoate hydroxymethyltransferase (275 aa).

Residues aspartate 44 and aspartate 83 each contribute to the Mg(2+) site. 3-methyl-2-oxobutanoate is bound by residues 44–45 (DS), aspartate 83, and lysine 113. Glutamate 115 serves as a coordination point for Mg(2+). Glutamate 182 serves as the catalytic Proton acceptor.

Belongs to the PanB family. As to quaternary structure, homodecamer; pentamer of dimers. Mg(2+) is required as a cofactor.

Its subcellular location is the cytoplasm. The catalysed reaction is 3-methyl-2-oxobutanoate + (6R)-5,10-methylene-5,6,7,8-tetrahydrofolate + H2O = 2-dehydropantoate + (6S)-5,6,7,8-tetrahydrofolate. It functions in the pathway cofactor biosynthesis; (R)-pantothenate biosynthesis; (R)-pantoate from 3-methyl-2-oxobutanoate: step 1/2. Functionally, catalyzes the reversible reaction in which hydroxymethyl group from 5,10-methylenetetrahydrofolate is transferred onto alpha-ketoisovalerate to form ketopantoate. The chain is 3-methyl-2-oxobutanoate hydroxymethyltransferase from Clostridium botulinum (strain Loch Maree / Type A3).